We begin with the raw amino-acid sequence, 80 residues long: Exodeoxyribonuclease 7 small subunit (80 aa).

This sequence belongs to the XseB family. Heterooligomer composed of large and small subunits.

It localises to the cytoplasm. It carries out the reaction Exonucleolytic cleavage in either 5'- to 3'- or 3'- to 5'-direction to yield nucleoside 5'-phosphates.. Functionally, bidirectionally degrades single-stranded DNA into large acid-insoluble oligonucleotides, which are then degraded further into small acid-soluble oligonucleotides. In Photobacterium profundum (strain SS9), this protein is Exodeoxyribonuclease 7 small subunit.